We begin with the raw amino-acid sequence, 165 residues long: Thiol peroxidase (165 aa).

Residues 18–165 form the Thioredoxin domain; it reads PQVGDNLAEF…DYDAALAALN (148 aa). Residue cysteine 60 is the Cysteine sulfenic acid (-SOH) intermediate of the active site. A disulfide bridge connects residues cysteine 60 and cysteine 94.

It belongs to the peroxiredoxin family. Tpx subfamily. As to quaternary structure, homodimer.

It carries out the reaction a hydroperoxide + [thioredoxin]-dithiol = an alcohol + [thioredoxin]-disulfide + H2O. Its function is as follows. Thiol-specific peroxidase that catalyzes the reduction of hydrogen peroxide and organic hydroperoxides to water and alcohols, respectively. Plays a role in cell protection against oxidative stress by detoxifying peroxides. This Corynebacterium glutamicum (strain ATCC 13032 / DSM 20300 / JCM 1318 / BCRC 11384 / CCUG 27702 / LMG 3730 / NBRC 12168 / NCIMB 10025 / NRRL B-2784 / 534) protein is Thiol peroxidase.